Here is a 315-residue protein sequence, read N- to C-terminus: MSDSLRIIFAGTPDFAARHLDALLTSGHNIVGVFTQPDRPAGRGKKLMPSPVKVLAEEKGLPVFQPVSLRPQENQHLVADLHADVMVVVAYGLILPKAVLDMPRLGCINVHGSLLPRWRGAAPIQRSLWAGDAETGVTIMQMDVGLDTGDMLYKLACPITAEDTSGSLYNKLAELGPQGLITTLKQLADGTATPEAQNEALVTHAEKLSKEEARIDWSLSAAQLERCIRAFNPWPMSWLEIDGQPVKVWQASVIEDATQSLPGTILAATKQGIQVATGKGILNLLSLQPAGKKAMSAQDLLNSRREWFIPGNRLA.

The N-terminal domain stretch occupies residues 2 to 189; it reads SDSLRIIFAG…LITTLKQLAD (188 aa). A (6S)-5,6,7,8-tetrahydrofolate-binding site is contributed by 113 to 116; it reads SLLP. The C-terminal domain stretch occupies residues 210-315; that stretch reads KEEARIDWSL…EWFIPGNRLA (106 aa).

The protein belongs to the Fmt family.

It carries out the reaction L-methionyl-tRNA(fMet) + (6R)-10-formyltetrahydrofolate = N-formyl-L-methionyl-tRNA(fMet) + (6S)-5,6,7,8-tetrahydrofolate + H(+). In terms of biological role, attaches a formyl group to the free amino group of methionyl-tRNA(fMet). The formyl group appears to play a dual role in the initiator identity of N-formylmethionyl-tRNA by promoting its recognition by IF2 and preventing the misappropriation of this tRNA by the elongation apparatus. The chain is Methionyl-tRNA formyltransferase from Salmonella typhi.